The following is a 505-amino-acid chain: ATP synthase subunit beta (505 aa).

Positions 1–25 are disordered; that stretch reads MAKAATPKETAAVKKPAAPKKAATA. 183 to 190 is an ATP binding site; that stretch reads GGAGVGKT.

It belongs to the ATPase alpha/beta chains family. In terms of assembly, F-type ATPases have 2 components, CF(1) - the catalytic core - and CF(0) - the membrane proton channel. CF(1) has five subunits: alpha(3), beta(3), gamma(1), delta(1), epsilon(1). CF(0) has three main subunits: a(1), b(2) and c(9-12). The alpha and beta chains form an alternating ring which encloses part of the gamma chain. CF(1) is attached to CF(0) by a central stalk formed by the gamma and epsilon chains, while a peripheral stalk is formed by the delta and b chains.

The protein resides in the cell inner membrane. It catalyses the reaction ATP + H2O + 4 H(+)(in) = ADP + phosphate + 5 H(+)(out). In terms of biological role, produces ATP from ADP in the presence of a proton gradient across the membrane. The catalytic sites are hosted primarily by the beta subunits. This chain is ATP synthase subunit beta, found in Sinorhizobium fredii (strain NBRC 101917 / NGR234).